The primary structure comprises 382 residues: UDP-N-acetylenolpyruvoylglucosamine reductase (382 aa).

An FAD-binding PCMH-type domain is found at 50–253 (RVGGPAVLAE…REAVLRLRAS (204 aa)). Residue R193 is part of the active site. S270 serves as the catalytic Proton donor. E374 is an active-site residue.

Belongs to the MurB family. Requires FAD as cofactor.

The protein localises to the cytoplasm. The catalysed reaction is UDP-N-acetyl-alpha-D-muramate + NADP(+) = UDP-N-acetyl-3-O-(1-carboxyvinyl)-alpha-D-glucosamine + NADPH + H(+). It participates in cell wall biogenesis; peptidoglycan biosynthesis. Functionally, cell wall formation. The sequence is that of UDP-N-acetylenolpyruvoylglucosamine reductase from Nocardia farcinica (strain IFM 10152).